A 503-amino-acid polypeptide reads, in one-letter code: Cytosolic carboxypeptidase 6 (503 aa).

A Peptidase M14 domain is found at 167–438 (YPYTYTRFQH…NVARTFLDYY (272 aa)). Zn(2+) is bound by residues His-230, Glu-233, and His-328. Glu-401 (proton donor/acceptor) is an active-site residue. Basic and acidic residues-rich tracts occupy residues 459–469 (IEVQRRKEKSP) and 487–503 (KGDK…STPF). Residues 459-503 (IEVQRRKEKSPPYKHPLLRGPASNYPNSKGDKKSSVNHKDPSTPF) are disordered.

It belongs to the peptidase M14 family. As to quaternary structure, interacts with MYLK. The cofactor is Zn(2+).

The protein localises to the cytoplasm. It is found in the cytosol. It localises to the cytoskeleton. Its subcellular location is the microtubule organizing center. The protein resides in the centrosome. The protein localises to the centriole. It is found in the golgi apparatus. It localises to the cilium basal body. It carries out the reaction (L-glutamyl)(n+1)-gamma-L-glutamyl-L-glutamyl-[protein] + H2O = (L-glutamyl)(n)-gamma-L-glutamyl-L-glutamyl-[protein] + L-glutamate. It catalyses the reaction C-terminal L-alpha-aminoacyl-L-glutamyl-L-glutamyl-[tubulin] + H2O = C-terminal L-alpha-aminoacyl-L-glutamyl-[tubulin] + L-glutamate. Functionally, metallocarboxypeptidase that mediates protein deglutamylation of tubulin and non-tubulin target proteins. Catalyzes the removal of polyglutamate side chains present on the gamma-carboxyl group of glutamate residues within the C-terminal tail of tubulin protein. Specifically cleaves tubulin long-side-chains, while it is not able to remove the branching point glutamate. Also catalyzes the removal of polyglutamate residues from the carboxy-terminus of non-tubulin proteins such as MYLK. Mediates the deglutamylation of nucleotidyltransferase CGAS, leading to CGAS antiviral defense response activation. Involved in KLF4 deglutamylation which promotes KLF4 proteasome-mediated degradation, thereby negatively regulating cell pluripotency maintenance and embryogenesis. This chain is Cytosolic carboxypeptidase 6, found in Homo sapiens (Human).